The chain runs to 362 residues: Methionine import ATP-binding protein MetN (362 aa).

Residues 2–241 (IHIENLSKTY…PRHEVTRAMV (240 aa)) enclose the ABC transporter domain. 38-45 (GPSGAGKS) is an ATP binding site.

The protein belongs to the ABC transporter superfamily. Methionine importer (TC 3.A.1.24) family. As to quaternary structure, the complex is composed of two ATP-binding proteins (MetN), two transmembrane proteins (MetI) and a solute-binding protein (MetQ).

The protein resides in the cell inner membrane. It carries out the reaction L-methionine(out) + ATP + H2O = L-methionine(in) + ADP + phosphate + H(+). It catalyses the reaction D-methionine(out) + ATP + H2O = D-methionine(in) + ADP + phosphate + H(+). Functionally, part of the ABC transporter complex MetNIQ involved in methionine import. Responsible for energy coupling to the transport system. The protein is Methionine import ATP-binding protein MetN of Bordetella bronchiseptica (strain ATCC BAA-588 / NCTC 13252 / RB50) (Alcaligenes bronchisepticus).